Consider the following 388-residue polypeptide: MQNVHKRVIKDINDGMKNLKQEFGIYLAPEEDDFYKVHFILQGPEGTPFEGGLYHGMIRLNNDHPFRPPNLHMITPSGRFEAEKYPISPNSRGICTTATSFHPESWTSMNNLETVLKGFVSLMCDPYDGGVGAVKSTDTQVKKLAQDSLTHIGNDLMVQKLFPDLYKAVNNGTFKPVKLAELSKIVYKEPTKPIVEEKSAKTSKSSTKTSVKSKKNQKSDSEEEENSDDDNTDSDSESDDFRDLDDVVDDSDQESDDESDSSSESENESGGSDDESDDGSDDESDDETSESDSESEEEKPVKKSTRKISKTTTKSSSTKPVKSIKSSKSTTTKPTKPTKSTKTTKSTKSTKSTKSTKPTESTKSSRSVKTTESSKSSKSSKSSKTGKK.

The region spanning 3–162 (NVHKRVIKDI…GNDLMVQKLF (160 aa)) is the UBC core domain. C95 acts as the Glycyl thioester intermediate in catalysis. Residues 195–388 (VEEKSAKTSK…SSKSSKTGKK (194 aa)) form a disordered region. Acidic residues-rich tracts occupy residues 221 to 238 (SEEEENSDDDNTDSDSES) and 246 to 297 (DVVD…ESEE). The segment covering 310 to 388 (KTTTKSSSTK…SSKSSKTGKK (79 aa)) has biased composition (low complexity).

This sequence belongs to the ubiquitin-conjugating enzyme family.

The enzyme catalyses S-ubiquitinyl-[E1 ubiquitin-activating enzyme]-L-cysteine + [E2 ubiquitin-conjugating enzyme]-L-cysteine = [E1 ubiquitin-activating enzyme]-L-cysteine + S-ubiquitinyl-[E2 ubiquitin-conjugating enzyme]-L-cysteine.. The protein operates within protein modification; protein ubiquitination. Its function is as follows. Catalyzes the covalent attachment of ubiquitin to other proteins. The protein is Probable ubiquitin-conjugating enzyme E2 L709 of Acanthamoeba polyphaga (Amoeba).